An 89-amino-acid chain; its full sequence is Barrier-to-autointegration factor 1 (89 aa).

It belongs to the BAF family. In terms of assembly, interacts with emr-1 and lem-2. Interacts with lem-4l, leading to decreased phosphorylation by VRK1 and promoting dephosphorylation by protein phosphatase 2A (PP2A). Phosphorylated by vrk-1. Phosphorylation by vrk-1 in mitosis is essential to achieve correct timing of recruitment of nuclear envelope components during nuclear envelope assembly. Dephosphorylated by protein phosphatase 2A (PP2A) following interaction with lem-4l during mitotic exit, leading to mitotic nuclear envelope reassembly.

It is found in the nucleus. Functionally, DNA-binding protein which plays an essential role in nuclear envelope formation. Required for normal chromosome segregation during mitosis. Associates with the nuclear lamina via its interaction with LEM domain containing proteins emr-1 and lem-2. In association with lem-3, plays a role in radiation-induced DNA damage repair response. This chain is Barrier-to-autointegration factor 1 (baf-1), found in Caenorhabditis elegans.